We begin with the raw amino-acid sequence, 406 residues long: Sorting nexin-6 (406 aa).

Met1 carries the post-translational modification N-acetylmethionine. Met2 carries the N-acetylmethionine; in Sorting nexin-6, N-terminally processed modification. The interval 2–179 is interaction with PIM1; it reads MEGLDDGPDF…NQDLSVRGKN (178 aa). The PX domain maps to 26-173; the sequence is LQSDAALQVD…HVFLEYNQDL (148 aa). A 1,2-diacyl-sn-glycero-3-phospho-(1D-myo-inositol-4,5-bisphosphate) contacts are provided by residues 41–47, 100–106, and 114–117; these read SERDKVK, FDASREK, and EGSM. Residues Ser116 and Ser194 each carry the phosphoserine modification. The interval 182-199 is membrane-binding amphipathic helix; that stretch reads EKLEDFFKNMVKSADGVI. Residues 203–406 form the BAR domain; sequence VKDVDDFFEH…NCLAVLNGDT (204 aa).

This sequence belongs to the sorting nexin family. As to quaternary structure, forms heterodimers with BAR domain-containing sorting nexins SNX1 and SNX2. The heterodimers are proposed to self-assemble into helical arrays on the membrane to stabilize and expand local membrane curvature underlying endosomal tubule formation. Thought to be a component of the originally described retromer complex (also called SNX-BAR retromer) which is a pentamer containing the heterotrimeric retromer cargo-selective complex (CSC), also described as vacuolar protein sorting subcomplex (VPS), and a heterodimeric membrane-deforming subcomplex formed between SNX1 or SNX2 and SNX5 or SNX6 (also called SNX-BAR subcomplex); the respective CSC and SNX-BAR subcomplexes associate with low affinity. Interacts with SNX1, SNX2, VPS26A, VPS29, VPS35, CDKN1B, TGFB receptors, BACE1, BRMS1, PIP5K1C isoform 3. Interacts with DCTN1; the association with DCTN1 is involved in movement of retromer-c ontaining vesicles toward the TGN. Interacts with CDKN1B and GIT1. Interacts with PIM1; translocating SNX6 to the nucleus. In vitro phosphorylated by PIM1; not affecting PIM1-dependent nuclear translocation.

The protein resides in the early endosome. Its subcellular location is the early endosome membrane. The protein localises to the cytoplasmic vesicle. It localises to the cytoplasm. It is found in the nucleus. Functionally, involved in several stages of intracellular trafficking. Interacts with membranes phosphatidylinositol 3,4-bisphosphate and/or phosphatidylinositol 4,5-bisphosphate. Acts in part as component of the retromer membrane-deforming SNX-BAR subcomplex. The SNX-BAR retromer mediates retrograde transport of cargo proteins from endosomes to the trans-Golgi network (TGN) and is involved in endosome-to-plasma membrane transport for cargo protein recycling. The SNX-BAR subcomplex functions to deform the donor membrane into a tubular profile called endosome-to-TGN transport carrier (ETC). Does not have in vitro vesicle-to-membrane remodeling activity. Involved in retrograde endosome-to-TGN transport of lysosomal enzyme receptor IGF2R. May function as link between transport vesicles and dynactin. Negatively regulates retrograde transport of BACE1 from the cell surface to the trans-Golgi network. Involved in E-cadherin sorting and degradation; inhibits PIP5K1C isoform 3-mediated E-cadherin degradation. In association with GIT1 involved in EGFR degradation. Promotes lysosomal degradation of CDKN1B. May contribute to transcription regulation. The sequence is that of Sorting nexin-6 (SNX6) from Homo sapiens (Human).